A 105-amino-acid chain; its full sequence is Small ribosomal subunit protein uS10 (105 aa).

Belongs to the universal ribosomal protein uS10 family. In terms of assembly, part of the 30S ribosomal subunit.

Functionally, involved in the binding of tRNA to the ribosomes. The chain is Small ribosomal subunit protein uS10 from Picosynechococcus sp. (strain ATCC 27264 / PCC 7002 / PR-6) (Agmenellum quadruplicatum).